Consider the following 616-residue polypeptide: Chaperone protein HscA (616 aa).

This sequence belongs to the heat shock protein 70 family.

In terms of biological role, chaperone involved in the maturation of iron-sulfur cluster-containing proteins. Has a low intrinsic ATPase activity which is markedly stimulated by HscB. Involved in the maturation of IscU. The polypeptide is Chaperone protein HscA (Escherichia coli O45:K1 (strain S88 / ExPEC)).